The chain runs to 139 residues: Translation initiation factor 2 subunit beta (139 aa).

Belongs to the eIF-2-beta/eIF-5 family. Heterotrimer composed of an alpha, a beta and a gamma chain.

Functionally, eIF-2 functions in the early steps of protein synthesis by forming a ternary complex with GTP and initiator tRNA. In Methanococcus aeolicus (strain ATCC BAA-1280 / DSM 17508 / OCM 812 / Nankai-3), this protein is Translation initiation factor 2 subunit beta.